Here is a 319-residue protein sequence, read N- to C-terminus: tRNA pseudouridine synthase B (319 aa).

Aspartate 47 serves as the catalytic Nucleophile.

The protein belongs to the pseudouridine synthase TruB family. Type 1 subfamily.

It catalyses the reaction uridine(55) in tRNA = pseudouridine(55) in tRNA. Responsible for synthesis of pseudouridine from uracil-55 in the psi GC loop of transfer RNAs. The chain is tRNA pseudouridine synthase B from Pseudoalteromonas translucida (strain TAC 125).